We begin with the raw amino-acid sequence, 818 residues long: FAD-dependent monooxygenase anuJ (818 aa).

Residues Glu-46, Ala-60, Arg-122, Asp-329, and Gly-342 each coordinate FAD. 3 helical membrane-spanning segments follow: residues 471–491 (VLWALPLLGMAVAGLLTMFSV), 539–559 (FFYQPFSFFADYGVWYGIMLV), and 571–591 (LSFALLWGMLNMWGIAIFVPI). N-linked (GlcNAc...) asparagine glycosylation occurs at Asn-614. Transmembrane regions (helical) follow at residues 621–641 (ILPVLLATHYATFMDAYLSPV) and 647–667 (AAGFLWELFPVWLSLAQAGLA). N-linked (GlcNAc...) asparagine glycosylation occurs at Asn-683. Helical transmembrane passes span 743-763 (WDQVFFAIPNLFWIILLFADL) and 778-798 (FSALGLIIAGGNGTMLGLMWL).

The protein belongs to the paxM FAD-dependent monooxygenase family.

Its subcellular location is the membrane. Its function is as follows. Highly reducing polyketide synthase; part of the gene cluster that mediates the biosynthesis of annullatin D, an alkylated aromatic polyketide with a fused dihydrobenzofuran lactone ring system that exhibits potent agonistic activities toward the cannabinoid receptors. AnuJ does not seem to play a role within the pathway. The annullatin backbone 2-hydroxymethyl-3-pentylphenol is assembled from one acetyl-CoA starter unit and 5 malonyl-CoA elongation units by cooperation of the highly reducing polyketide synthase anuA, the short-chain dehydrogenase anuB and the oxidoreductase anuC, before being hydroxylated at the C-5 alkyl chain by the cytochrome P450 monooxygenase anuE to form (8S)-annullatin E. The prenyltransferase anuH subsequently installs one isoprenyl group at the benzene ring to form (8S)-annullatin J. Enzymatic or nonenzymatic dihydro-benzofuran ring formation between the prenyl and the phenolic hydroxyl groups in (8S)-annullatin J results in two diastereomers (2S,9S)-annullatin H and compound 12. The intermediate (2S,9S)-annullatin H is then converted to (2S,9S)-annullatin D by the FAD-linked oxidoreductase anuG-catalyzed five-member lactone ring formation. The isomer 12 acts as a substrate for the short-chain dehydrogenase anuF and is oxidized to (2R)-annullatin F, which is subsequently acetylated by an acetyltransferase leading to (2R)-annullatin G formation. The remaining enzymes identified within the cluster, anuD, anuI and anuJ, seem not to be involved in annullatin biosynthesis. This is FAD-dependent monooxygenase anuJ from Penicillium roqueforti (strain FM164).